A 396-amino-acid polypeptide reads, in one-letter code: Ornithine aminotransferase (396 aa).

Lysine 255 bears the N6-(pyridoxal phosphate)lysine mark.

It belongs to the class-III pyridoxal-phosphate-dependent aminotransferase family. OAT subfamily. Pyridoxal 5'-phosphate serves as cofactor.

The protein localises to the cytoplasm. The enzyme catalyses a 2-oxocarboxylate + L-ornithine = L-glutamate 5-semialdehyde + an L-alpha-amino acid. It participates in amino-acid biosynthesis; L-proline biosynthesis; L-glutamate 5-semialdehyde from L-ornithine: step 1/1. Its function is as follows. Catalyzes the interconversion of ornithine to glutamate semialdehyde. In Staphylococcus epidermidis (strain ATCC 35984 / DSM 28319 / BCRC 17069 / CCUG 31568 / BM 3577 / RP62A), this protein is Ornithine aminotransferase.